We begin with the raw amino-acid sequence, 294 residues long: Foldase protein PrsA 1 (294 aa).

Positions 1-21 (MTKLKKVMISVIAATLLLLAG) are cleaved as a signal peptide. Cys-22 carries the N-palmitoyl cysteine lipid modification. A lipid anchor (S-diacylglycerol cysteine) is attached at Cys-22. A PpiC domain is found at 135–226 (EPDITVRHIL…YGYHLIQLVK (92 aa)).

This sequence belongs to the PrsA family.

Its subcellular location is the cell membrane. The enzyme catalyses [protein]-peptidylproline (omega=180) = [protein]-peptidylproline (omega=0). In terms of biological role, plays a major role in protein secretion by helping the post-translocational extracellular folding of several secreted proteins. This chain is Foldase protein PrsA 1 (prsA1), found in Listeria monocytogenes serovar 1/2a (strain ATCC BAA-679 / EGD-e).